A 264-amino-acid polypeptide reads, in one-letter code: uncharacterized protein (264 aa).

The N-terminal stretch at 1-26 (MMKKLFHSTLIVLLFFSFFGVQPIHA) is a signal peptide.

This is an uncharacterized protein from Bacillus subtilis (strain 168).